Here is a 352-residue protein sequence, read N- to C-terminus: Protein RecA (352 aa).

65–72 is an ATP binding site; the sequence is GPESSGKT.

It belongs to the RecA family.

The protein resides in the cytoplasm. Functionally, can catalyze the hydrolysis of ATP in the presence of single-stranded DNA, the ATP-dependent uptake of single-stranded DNA by duplex DNA, and the ATP-dependent hybridization of homologous single-stranded DNAs. It interacts with LexA causing its activation and leading to its autocatalytic cleavage. The polypeptide is Protein RecA (Pseudomonas fluorescens (strain Pf0-1)).